The primary structure comprises 555 residues: Dihydroxy-acid dehydratase (555 aa).

Residue D78 coordinates Mg(2+). A [2Fe-2S] cluster-binding site is contributed by C119. Mg(2+)-binding residues include D120 and K121. K121 is modified (N6-carboxylysine). C191 provides a ligand contact to [2Fe-2S] cluster. E444 provides a ligand contact to Mg(2+). The active-site Proton acceptor is the S470.

It belongs to the IlvD/Edd family. In terms of assembly, homodimer. [2Fe-2S] cluster serves as cofactor. Requires Mg(2+) as cofactor.

It carries out the reaction (2R)-2,3-dihydroxy-3-methylbutanoate = 3-methyl-2-oxobutanoate + H2O. The catalysed reaction is (2R,3R)-2,3-dihydroxy-3-methylpentanoate = (S)-3-methyl-2-oxopentanoate + H2O. The protein operates within amino-acid biosynthesis; L-isoleucine biosynthesis; L-isoleucine from 2-oxobutanoate: step 3/4. Its pathway is amino-acid biosynthesis; L-valine biosynthesis; L-valine from pyruvate: step 3/4. Its function is as follows. Functions in the biosynthesis of branched-chain amino acids. Catalyzes the dehydration of (2R,3R)-2,3-dihydroxy-3-methylpentanoate (2,3-dihydroxy-3-methylvalerate) into 2-oxo-3-methylpentanoate (2-oxo-3-methylvalerate) and of (2R)-2,3-dihydroxy-3-methylbutanoate (2,3-dihydroxyisovalerate) into 2-oxo-3-methylbutanoate (2-oxoisovalerate), the penultimate precursor to L-isoleucine and L-valine, respectively. In Nitratidesulfovibrio vulgaris (strain DSM 19637 / Miyazaki F) (Desulfovibrio vulgaris), this protein is Dihydroxy-acid dehydratase.